The chain runs to 530 residues: Hyccin 2 (530 aa).

Thr-30 and Thr-306 each carry phosphothreonine. Residues Ser-321 and Ser-341 each carry the phosphoserine modification. Positions 328-410 (RREGAEGVNG…DSVVRKQYVQ (83 aa)) are disordered. Over residues 353–373 (SGASLSSQPIGTKPSSSSQRG) the composition is skewed to polar residues. 4 positions are modified to phosphoserine: Ser-430, Ser-442, Ser-444, and Ser-491. Positions 502–530 (EGKELLSPGAPLTKQSRSPSFNMQLISQV) are disordered. Polar residues predominate over residues 514 to 530 (TKQSRSPSFNMQLISQV).

The protein belongs to the Hyccin family. In terms of assembly, component of a phosphatidylinositol 4-kinase (PI4K) complex, composed of PI4KA, EFR3 (EFR3A or EFR3B), TTC7 (TTC7A or TTC7B) and HYCC (HYCC1 or HYCC2).

The protein resides in the cytoplasm. The protein localises to the cytosol. Its subcellular location is the cell membrane. Functionally, component of a complex required to localize phosphatidylinositol 4-kinase (PI4K) to the plasma membrane. This is Hyccin 2 from Homo sapiens (Human).